The chain runs to 153 residues: Small ribosomal subunit protein uS13 (153 aa).

The segment at 129–153 (RGQRTKSTFRHGSSVGVSRTRPTGN) is disordered. Positions 143–153 (VGVSRTRPTGN) are enriched in polar residues.

The protein belongs to the universal ribosomal protein uS13 family. Part of the 30S ribosomal subunit. Forms a loose heterodimer with protein S19. Forms two bridges to the 50S subunit in the 70S ribosome.

Functionally, located at the top of the head of the 30S subunit, it contacts several helices of the 16S rRNA. In the 70S ribosome it contacts the 23S rRNA (bridge B1a) and protein L5 of the 50S subunit (bridge B1b), connecting the 2 subunits; these bridges are implicated in subunit movement. This Methanosphaera stadtmanae (strain ATCC 43021 / DSM 3091 / JCM 11832 / MCB-3) protein is Small ribosomal subunit protein uS13.